The following is a 107-amino-acid chain: Bombesin (107 aa).

The N-terminal stretch at 1-26 is a signal peptide; the sequence is MSAIPLNRILPLGFLLIFSFISLSSC. A propeptide spanning residues 27 to 41 is cleaved from the precursor; the sequence is MEFVEDPNNQGGLNL. Gln42 carries the post-translational modification Pyrrolidone carboxylic acid. Met55 is modified (methionine amide). A propeptide spanning residues 56-107 is cleaved from the precursor; the sequence is GKKSLQDTDFEEMESFAKRNVENMKAESERELRHAQLVVRNILEQYLKNMQN.

As to expression, expressed by the skin glands.

Its subcellular location is the secreted. Functionally, stimulates smooth muscle contraction. Role in induction of hypothermia, stimulation of DNA replication and release of many gastrointestinal hormones. Possesses insulin-releasing activity. This is Bombesin from Bombina variegata (Yellow-bellied toad).